The primary structure comprises 271 residues: Formamidopyrimidine-DNA glycosylase (271 aa).

The active-site Schiff-base intermediate with DNA is Pro2. The Proton donor role is filled by Glu3. Lys56 functions as the Proton donor; for beta-elimination activity in the catalytic mechanism. DNA is bound by residues His89, Arg107, and Lys151. The FPG-type zinc-finger motif lies at 236-270 (NVYGRAGLQCRQCGTPVRLSRQGQRSTYFCPHCQR). The active-site Proton donor; for delta-elimination activity is the Arg260.

This sequence belongs to the FPG family. In terms of assembly, monomer. The cofactor is Zn(2+).

The enzyme catalyses Hydrolysis of DNA containing ring-opened 7-methylguanine residues, releasing 2,6-diamino-4-hydroxy-5-(N-methyl)formamidopyrimidine.. It catalyses the reaction 2'-deoxyribonucleotide-(2'-deoxyribose 5'-phosphate)-2'-deoxyribonucleotide-DNA = a 3'-end 2'-deoxyribonucleotide-(2,3-dehydro-2,3-deoxyribose 5'-phosphate)-DNA + a 5'-end 5'-phospho-2'-deoxyribonucleoside-DNA + H(+). Its function is as follows. Involved in base excision repair of DNA damaged by oxidation or by mutagenic agents. Acts as a DNA glycosylase that recognizes and removes damaged bases. Has a preference for oxidized purines, such as 7,8-dihydro-8-oxoguanine (8-oxoG). Has AP (apurinic/apyrimidinic) lyase activity and introduces nicks in the DNA strand. Cleaves the DNA backbone by beta-delta elimination to generate a single-strand break at the site of the removed base with both 3'- and 5'-phosphates. The protein is Formamidopyrimidine-DNA glycosylase of Acidovorax ebreus (strain TPSY) (Diaphorobacter sp. (strain TPSY)).